Reading from the N-terminus, the 440-residue chain is C4-dicarboxylate transport protein (440 aa).

9 helical membrane-spanning segments follow: residues 7–29 (LYKS…GHYY), 49–66 (MVIA…IAGM), 79–101 (ALLY…VNVV), 143–165 (VVGA…FGFA), 186–208 (VMFN…AMAF), 221–243 (LGYL…LGGI), 291–313 (VVGL…YLTM), 328–350 (ITHQ…GVTG), and 355–377 (VLAA…ILGI). The segment at 419 to 440 (GGAPLIDTRPTDDLGVAEGPAR) is disordered.

This sequence belongs to the dicarboxylate/amino acid:cation symporter (DAACS) (TC 2.A.23) family.

It localises to the cell inner membrane. In terms of biological role, responsible for the transport of dicarboxylates such as succinate, fumarate, and malate from the periplasm across the membrane. This is C4-dicarboxylate transport protein from Pseudomonas putida (strain ATCC 47054 / DSM 6125 / CFBP 8728 / NCIMB 11950 / KT2440).